Consider the following 257-residue polypeptide: 3-deoxy-manno-octulosonate cytidylyltransferase (257 aa).

Belongs to the KdsB family.

Its subcellular location is the cytoplasm. It carries out the reaction 3-deoxy-alpha-D-manno-oct-2-ulosonate + CTP = CMP-3-deoxy-beta-D-manno-octulosonate + diphosphate. The protein operates within nucleotide-sugar biosynthesis; CMP-3-deoxy-D-manno-octulosonate biosynthesis; CMP-3-deoxy-D-manno-octulosonate from 3-deoxy-D-manno-octulosonate and CTP: step 1/1. It participates in bacterial outer membrane biogenesis; lipopolysaccharide biosynthesis. Its function is as follows. Activates KDO (a required 8-carbon sugar) for incorporation into bacterial lipopolysaccharide in Gram-negative bacteria. This Chromohalobacter salexigens (strain ATCC BAA-138 / DSM 3043 / CIP 106854 / NCIMB 13768 / 1H11) protein is 3-deoxy-manno-octulosonate cytidylyltransferase.